Reading from the N-terminus, the 1019-residue chain is Outer capsid protein P3 (1019 aa).

This sequence belongs to the phytoreovirus inner capsid protein P3 family. As to quaternary structure, homodimer. Homomultimer.

It localises to the virion. The protein localises to the host cytoplasm. Capsid protein which self-assembles to form the inner icosahedral capsid with a T=2 symmetry, and consisting of 60 P3 dimers. In Alopecurus aequalis (Barnyard grass), this protein is Outer capsid protein P3.